The sequence spans 141 residues: ATP synthase F(0) complex subunit C2, mitochondrial (141 aa).

The transit peptide at 1–66 (MFACSKFVST…RSFQTSAISR (66 aa)) directs the protein to the mitochondrion. A helical membrane pass occupies residues 82 to 102 (VGVAGSGAGIGTVFGSLIIGY). Residue Lys109 is modified to N6,N6,N6-trimethyllysine. Residues 117–137 (ILGFALSEAMGLFCLMVAFLI) traverse the membrane as a helical segment.

Belongs to the ATPase C chain family. F-type ATPases have 2 components, CF(1) - the catalytic core - and CF(0) - the membrane proton channel. CF(1) has five subunits: alpha(3), beta(3), gamma(1), delta(1), epsilon(1). CF(0) has three main subunits: a, b and c. Interacts with DNAJC30; interaction is direct. Trimethylated by ATPSCKMT at Lys-109. Methylation is required for proper incorporation of the C subunit into the ATP synthase complex and mitochondrial respiration.

Its subcellular location is the mitochondrion membrane. Functionally, mitochondrial membrane ATP synthase (F(1)F(0) ATP synthase or Complex V) produces ATP from ADP in the presence of a proton gradient across the membrane which is generated by electron transport complexes of the respiratory chain. F-type ATPases consist of two structural domains, F(1) - containing the extramembraneous catalytic core and F(0) - containing the membrane proton channel, linked together by a central stalk and a peripheral stalk. During catalysis, ATP synthesis in the catalytic domain of F(1) is coupled via a rotary mechanism of the central stalk subunits to proton translocation. Part of the complex F(0) domain. A homomeric c-ring of probably 10 subunits is part of the complex rotary element. In Homo sapiens (Human), this protein is ATP synthase F(0) complex subunit C2, mitochondrial.